Here is a 299-residue protein sequence, read N- to C-terminus: Coenzyme PQQ synthesis protein B (299 aa).

The protein belongs to the PqqB family.

It functions in the pathway cofactor biosynthesis; pyrroloquinoline quinone biosynthesis. In terms of biological role, may be involved in the transport of PQQ or its precursor to the periplasm. The polypeptide is Coenzyme PQQ synthesis protein B (Methylorubrum extorquens (strain CM4 / NCIMB 13688) (Methylobacterium extorquens)).